A 238-amino-acid polypeptide reads, in one-letter code: Purine nucleoside phosphorylase DeoD-type (238 aa).

H4 is a binding site for a purine D-ribonucleoside. Phosphate is bound by residues G20, R24, R43, and 87 to 90 (RVGS). A purine D-ribonucleoside is bound by residues 179–181 (EME) and 203–204 (SD). D204 serves as the catalytic Proton donor.

Belongs to the PNP/UDP phosphorylase family. Homohexamer; trimer of homodimers.

The enzyme catalyses a purine D-ribonucleoside + phosphate = a purine nucleobase + alpha-D-ribose 1-phosphate. It catalyses the reaction a purine 2'-deoxy-D-ribonucleoside + phosphate = a purine nucleobase + 2-deoxy-alpha-D-ribose 1-phosphate. In terms of biological role, catalyzes the reversible phosphorolytic breakdown of the N-glycosidic bond in the beta-(deoxy)ribonucleoside molecules, with the formation of the corresponding free purine bases and pentose-1-phosphate. This chain is Purine nucleoside phosphorylase DeoD-type, found in Mannheimia succiniciproducens (strain KCTC 0769BP / MBEL55E).